Consider the following 1202-residue polypeptide: Nucleolar protein 6 (1202 aa).

A disordered region spans residues 1–64; that stretch reads MNKTKRKQQS…KKYKDNETNK (64 aa).

Belongs to the NRAP family. Part of the small subunit (SSU) processome, composed of more than 70 proteins and the RNA chaperone small nucleolar RNA (snoRNA) U3.

Its subcellular location is the nucleus. The protein localises to the nucleolus. It is found in the chromosome. Its function is as follows. Part of the small subunit (SSU) processome, first precursor of the small eukaryotic ribosomal subunit. During the assembly of the SSU processome in the nucleolus, many ribosome biogenesis factors, an RNA chaperone and ribosomal proteins associate with the nascent pre-rRNA and work in concert to generate RNA folding, modifications, rearrangements and cleavage as well as targeted degradation of pre-ribosomal RNA by the RNA exosome. The chain is Nucleolar protein 6 from Drosophila willistoni (Fruit fly).